The primary structure comprises 224 residues: Flagellar L-ring protein (224 aa).

Positions 1 to 15 are cleaved as a signal peptide; the sequence is MIKYIALASVVLLVG. Residue cysteine 16 is the site of N-palmitoyl cysteine attachment. The S-diacylglycerol cysteine moiety is linked to residue cysteine 16.

This sequence belongs to the FlgH family. As to quaternary structure, the basal body constitutes a major portion of the flagellar organelle and consists of four rings (L,P,S, and M) mounted on a central rod.

The protein localises to the cell outer membrane. It is found in the bacterial flagellum basal body. In terms of biological role, assembles around the rod to form the L-ring and probably protects the motor/basal body from shearing forces during rotation. The protein is Flagellar L-ring protein of Shewanella frigidimarina (strain NCIMB 400).